A 65-amino-acid polypeptide reads, in one-letter code: Small vasohibin-binding protein (65 aa).

Basic and acidic residues predominate over residues 1 to 22 (MEPACRKDKQKQQTPTRGDRTK). Positions 1-30 (MEPACRKDKQKQQTPTRGDRTKQKTAQQEL) are disordered. Residues 31 to 51 (KQRQRAEIYALNKVMTELEQQ) adopt a coiled-coil conformation.

The protein belongs to the SVBP family.

It is found in the cytoplasm. Its subcellular location is the secreted. The protein localises to the cytoskeleton. Functionally, enhances the tyrosine carboxypeptidase activity of vash1 and vash2, thereby promoting the removal of the C-terminal tyrosine residue of alpha-tubulin. Also required to enhance the solubility and secretion of vash1 and vash2. May play a role in axon and excitatory synapse formation. The polypeptide is Small vasohibin-binding protein (Danio rerio (Zebrafish)).